A 384-amino-acid chain; its full sequence is Guanine nucleotide-binding protein alpha-1 subunit (384 aa).

Gly2 carries the N-myristoyl glycine lipid modification. A lipid anchor (S-palmitoyl cysteine) is attached at Cys5. The G-alpha domain occupies 38–384 (HIQKLLLLGA…RRNLFEAGLL (347 aa)). The interval 41-54 (KLLLLGAGESGKST) is G1 motif. 14 residues coordinate GTP: Glu49, Ser50, Gly51, Lys52, Ser53, Thr54, Leu188, Tyr189, Thr194, Gly222, Asn288, Lys289, Asp291, and Ala356. Position 53 (Ser53) interacts with Mg(2+). A G2 motif region spans residues 186-194 (DVLYARVRT). Thr194 lines the Mg(2+) pocket. The segment at 215–224 (YRLFDVGGQR) is G3 motif. The segment at 284 to 291 (MLFLNKFD) is G4 motif. Positions 354–359 (TTALDQ) are G5 motif.

The protein belongs to the G-alpha family. In terms of assembly, g proteins are composed of 3 units; alpha, beta and gamma. The alpha chain contains the guanine nucleotide binding site. The cofactor is Mg(2+).

Functionally, guanine nucleotide-binding proteins (G proteins) are involved as modulators or transducers in various transmembrane signaling systems. This Lupinus luteus (European yellow lupine) protein is Guanine nucleotide-binding protein alpha-1 subunit (GPA1).